Reading from the N-terminus, the 173-residue chain is Disulfide bond formation protein B (173 aa).

Over methionine 1 to alanine 14 the chain is Cytoplasmic. A helical membrane pass occupies residues tryptophan 15–phenylalanine 31. Residues phenylalanine 32–isoleucine 49 are Periplasmic-facing. An intrachain disulfide couples cysteine 41 to cysteine 44. A helical membrane pass occupies residues alanine 50–proline 65. The Cytoplasmic segment spans residues glutamine 66 to tryptophan 72. Residues serine 73–leucine 90 form a helical membrane-spanning segment. Over lysine 91–glutamine 145 the chain is Periplasmic. Cysteine 105 and cysteine 131 are disulfide-bonded. Residues tryptophan 146–glycine 164 form a helical membrane-spanning segment. Residues asparagine 165–serine 173 are Cytoplasmic-facing.

It belongs to the DsbB family.

The protein localises to the cell inner membrane. Its function is as follows. Required for disulfide bond formation in some periplasmic proteins. Acts by oxidizing the DsbA protein. This is Disulfide bond formation protein B from Aeromonas hydrophila subsp. hydrophila (strain ATCC 7966 / DSM 30187 / BCRC 13018 / CCUG 14551 / JCM 1027 / KCTC 2358 / NCIMB 9240 / NCTC 8049).